Reading from the N-terminus, the 264-residue chain is Small ribosomal subunit protein uS2 (264 aa).

The protein belongs to the universal ribosomal protein uS2 family.

The sequence is that of Small ribosomal subunit protein uS2 from Synechococcus sp. (strain JA-2-3B'a(2-13)) (Cyanobacteria bacterium Yellowstone B-Prime).